We begin with the raw amino-acid sequence, 122 residues long: MIQPQTLLNVADNSGARELMCIRILGASNRRYANIGDVIVAVIKEAVPNMPLERSEVIRAVIVRTRKELKRENGMRIRYDDNAAVVIDQEGNPKGTRVFGAIARELRELNFTKIVSLAPEVL.

It belongs to the universal ribosomal protein uL14 family. Part of the 50S ribosomal subunit.

The protein resides in the plastid. The protein localises to the chloroplast. In terms of biological role, binds to 23S rRNA. In Lemna minor (Common duckweed), this protein is Large ribosomal subunit protein uL14c.